The chain runs to 131 residues: Structural protein ORF131 (131 aa).

Belongs to the viral ORF131/RIP family.

It localises to the virion. The chain is Structural protein ORF131 from Acidianus convivator (ATV).